A 316-amino-acid chain; its full sequence is 4-hydroxy-3-methylbut-2-enyl diphosphate reductase (316 aa).

Cysteine 12 serves as a coordination point for [4Fe-4S] cluster. Positions 41 and 74 each coordinate (2E)-4-hydroxy-3-methylbut-2-enyl diphosphate. Residues histidine 41 and histidine 74 each contribute to the dimethylallyl diphosphate site. Residues histidine 41 and histidine 74 each coordinate isopentenyl diphosphate. Cysteine 96 is a binding site for [4Fe-4S] cluster. Histidine 124 serves as a coordination point for (2E)-4-hydroxy-3-methylbut-2-enyl diphosphate. Histidine 124 contributes to the dimethylallyl diphosphate binding site. Histidine 124 provides a ligand contact to isopentenyl diphosphate. The active-site Proton donor is the glutamate 126. Threonine 167 serves as a coordination point for (2E)-4-hydroxy-3-methylbut-2-enyl diphosphate. Residue cysteine 197 coordinates [4Fe-4S] cluster. Positions 225, 226, 227, and 269 each coordinate (2E)-4-hydroxy-3-methylbut-2-enyl diphosphate. Dimethylallyl diphosphate-binding residues include serine 225, serine 226, asparagine 227, and serine 269. 4 residues coordinate isopentenyl diphosphate: serine 225, serine 226, asparagine 227, and serine 269.

Belongs to the IspH family. Homodimer. [4Fe-4S] cluster serves as cofactor.

The enzyme catalyses isopentenyl diphosphate + 2 oxidized [2Fe-2S]-[ferredoxin] + H2O = (2E)-4-hydroxy-3-methylbut-2-enyl diphosphate + 2 reduced [2Fe-2S]-[ferredoxin] + 2 H(+). The catalysed reaction is dimethylallyl diphosphate + 2 oxidized [2Fe-2S]-[ferredoxin] + H2O = (2E)-4-hydroxy-3-methylbut-2-enyl diphosphate + 2 reduced [2Fe-2S]-[ferredoxin] + 2 H(+). It functions in the pathway isoprenoid biosynthesis; dimethylallyl diphosphate biosynthesis; dimethylallyl diphosphate from (2E)-4-hydroxy-3-methylbutenyl diphosphate: step 1/1. Its pathway is isoprenoid biosynthesis; isopentenyl diphosphate biosynthesis via DXP pathway; isopentenyl diphosphate from 1-deoxy-D-xylulose 5-phosphate: step 6/6. Functionally, catalyzes the conversion of 1-hydroxy-2-methyl-2-(E)-butenyl 4-diphosphate (HMBPP) into a mixture of isopentenyl diphosphate (IPP) and dimethylallyl diphosphate (DMAPP). Acts in the terminal step of the DOXP/MEP pathway for isoprenoid precursor biosynthesis. In Escherichia coli (strain ATCC 8739 / DSM 1576 / NBRC 3972 / NCIMB 8545 / WDCM 00012 / Crooks), this protein is 4-hydroxy-3-methylbut-2-enyl diphosphate reductase.